The sequence spans 234 residues: MPTTPIPFTPLHMFRRLLCVGLFLFAGIHTTLGATLPLPSTSYKYTVLDQDLSAALQEFGNNLKISVNISAEVKGRIRGRIPELSPREFLDRLTDLYDLQWYYDGVVLYVSAAKEAQTRMLVLSSVHFSAFKLALDKLDISDERYPVRPAPGNGLVLVSGPPRFIALIEQTLNGLLAVAQAQPRATDTPARESVMVLFRGSSTTVVRGGRPEVFYTSEMLPENDDGGKAELSKK.

A helical membrane pass occupies residues 17–36 (LLCVGLFLFAGIHTTLGATL).

It localises to the membrane. Its function is as follows. Regulates cultivar-specific nodulation of soybean. The sequence is that of Nodulation protein NolW (nolW) from Rhizobium fredii (Sinorhizobium fredii).